We begin with the raw amino-acid sequence, 429 residues long: Probable M18 family aminopeptidase 2 (429 aa).

3 residues coordinate Zn(2+): His-82, His-156, and His-401.

It belongs to the peptidase M18 family. The cofactor is Zn(2+).

The chain is Probable M18 family aminopeptidase 2 from Stutzerimonas stutzeri (strain A1501) (Pseudomonas stutzeri).